A 208-amino-acid polypeptide reads, in one-letter code: Outer-membrane lipoprotein carrier protein (208 aa).

Positions 1–22 (MKNLLCAVMLTSPLLYSTAVFA) are cleaved as a signal peptide.

This sequence belongs to the LolA family. In terms of assembly, monomer.

The protein localises to the periplasm. Its function is as follows. Participates in the translocation of lipoproteins from the inner membrane to the outer membrane. Only forms a complex with a lipoprotein if the residue after the N-terminal Cys is not an aspartate (The Asp acts as a targeting signal to indicate that the lipoprotein should stay in the inner membrane). The polypeptide is Outer-membrane lipoprotein carrier protein (Shewanella sp. (strain W3-18-1)).